Here is a 359-residue protein sequence, read N- to C-terminus: MRVSDFSFDLPEALIARYPKAERTASRLMTLNGNSGAITDGVFTDIVAQLNSGDLLVFNNTRVIPARMFGQKASGGKIEVLVERVIDQNTALAHIRASKSPKVGNELFLGNEDSDVKVKATMVARHGALFELKFNSDESVLTILDKIGHMPLPPYIDRPDEDSDKERYQTVYNEKPGAVAAPTAGLHFDEALLERIKAKGVELAFVTLHVGAGTFQPVKVDEIADHIMHAEYVEVSDEVVAQIAKTKAAGGRVVAVGTTSVRSLESAAKAALDKNKPLSAFYGDTDIFITPGCQFQIIDALVTNFHLSESTLLMLVSAFSGYDHIMSAYQHAISQEYRFFSYGDAMFLTKQELIKQDTP.

The protein belongs to the QueA family. As to quaternary structure, monomer.

Its subcellular location is the cytoplasm. It catalyses the reaction 7-aminomethyl-7-carbaguanosine(34) in tRNA + S-adenosyl-L-methionine = epoxyqueuosine(34) in tRNA + adenine + L-methionine + 2 H(+). The protein operates within tRNA modification; tRNA-queuosine biosynthesis. Functionally, transfers and isomerizes the ribose moiety from AdoMet to the 7-aminomethyl group of 7-deazaguanine (preQ1-tRNA) to give epoxyqueuosine (oQ-tRNA). This Colwellia psychrerythraea (strain 34H / ATCC BAA-681) (Vibrio psychroerythus) protein is S-adenosylmethionine:tRNA ribosyltransferase-isomerase.